The following is a 445-amino-acid chain: Histone acetyltransferase ESA1 (445 aa).

Position 17 is a phosphoserine (S17). The 53-residue stretch at I22 to L74 folds into the Tudor-knot domain. The tract at residues E88 to D114 is disordered. The segment covering T99 to L109 has biased composition (polar residues). Positions A162 to P433 constitute an MYST-type HAT domain. Residues I195–L220 form a C2HC MYST-type; degenerate zinc finger. The short motif at R245–Y266 is the ESA1-RPD3 motif element. Residue K262 is modified to N6-acetyllysine; by autocatalysis. Acetyl-CoA-binding positions include A303–T307 and Q312–K318. E338 acts as the Proton donor/acceptor in catalysis. Position 342 (S342) interacts with acetyl-CoA.

It belongs to the MYST (SAS/MOZ) family. As to quaternary structure, component of the NuA4 histone acetyltransferase complex composed of at least ACT1, ARP4, EAF3, EAF5, EAF6, EAF7, EPL1, ESA1, SWC4, TRA1, VID21, YAF9 and YNG2. The complex interacts with histones H4 (HHF1 and HHF2), H3 (HHT1 and HHT2) and H2A (HTA1 and HTA2). In terms of processing, autoacetylation at Lys-262 is required for proper function.

The enzyme catalyses L-lysyl-[histone] + acetyl-CoA = N(6)-acetyl-L-lysyl-[histone] + CoA + H(+). The catalysed reaction is L-lysyl-[protein] + acetyl-CoA = N(6)-acetyl-L-lysyl-[protein] + CoA + H(+). It carries out the reaction 2-hydroxyisobutanoyl-CoA + L-lysyl-[protein] = N(6)-(2-hydroxyisobutanoyl)-L-lysyl-[protein] + CoA + H(+). It catalyses the reaction (2E)-butenoyl-CoA + L-lysyl-[protein] = N(6)-(2E)-butenoyl-L-lysyl-[protein] + CoA + H(+). In terms of biological role, catalytic component of the NuA4 histone acetyltransferase (HAT), a multiprotein complex involved in epigenetic transcriptional activation of selected genes principally by acetylation of nucleosomal histones H4, H3, H2B, H2A and H2A variant H2A.Z. Acetylates histone H4 to form H4K5ac, H4K8ac, H4K12ac and H4K16ac, histone H3 to form H3K14ac, histone H2B to form H2BK16ac, histone H2A to form H2AK4ac and H2AK7ac, and histone variant H2A.Z to form H2A.ZK14ac. Acetylation of histones gives a specific tag for epigenetic transcription initiation and elongation. Acetylation of histone H4 is essential for DNA double-strand break repair through homologous recombination. Involved in cell cycle progression. Recruitment to promoters depends on H3K4me. Also acetylates non-histone proteins, such as ATG3 and PAH1. Regulates autophagy by acetylating ATG3, controlling interaction the interaction between ATG3 and ATG8 and ATG8 lipidation. Acts as a regulator of fatty-acid-induced triacylglycerol synthesis by catalyzing acetylation of PAH1, thereby promoting the synthesis of diacylglycerol. In addition to protein acetyltransferase, can use different acyl-CoA substrates, such as 2-hydroxyisobutanoyl-CoA (2-hydroxyisobutyryl-CoA) or (2E)-butenoyl-CoA (crotonyl-CoA), and is able to mediate protein 2-hydroxyisobutyrylation and crotonylation, respectively. Catalyzes histone crotonylation. In Saccharomyces cerevisiae (strain ATCC 204508 / S288c) (Baker's yeast), this protein is Histone acetyltransferase ESA1.